Consider the following 687-residue polypeptide: E3 ubiquitin-protein ligase RNF19B (687 aa).

Positions methionine 1–cysteine 294 are required for ubiquitin ligase activity and for protection against staurosporin-induced cell death. A disordered region spans residues arginine 53 to glycine 88. Residues proline 60 to serine 85 are compositionally biased toward pro residues. Positions serine 91–glycine 313 are TRIAD supradomain. 14 residues coordinate Zn(2+): cysteine 95, cysteine 98, cysteine 118, cysteine 121, cysteine 182, cysteine 187, cysteine 204, cysteine 209, cysteine 214, cysteine 217, histidine 222, cysteine 227, cysteine 263, and cysteine 266. The segment at cysteine 95–glutamate 144 adopts an RING-type 1 zinc-finger fold. An IBR-type zinc finger spans residues threonine 161 to cysteine 227. An RING-type 2; atypical zinc finger spans residues cysteine 263–cysteine 294. Cysteine 278 is an active-site residue. The Zn(2+) site is built by cysteine 283, cysteine 286, cysteine 291, cysteine 294, histidine 302, and cysteine 309. 2 helical membrane-spanning segments follow: residues leucine 330–isoleucine 350 and valine 391–valine 411. Positions serine 618–arginine 662 are disordered. The span at glutamine 629 to tyrosine 641 shows a compositional bias: acidic residues.

This sequence belongs to the RBR family. RNF19 subfamily. Interacts with UBE2L3, UBE2L6 and UCKL1.

It localises to the cytoplasmic granule membrane. The protein resides in the endoplasmic reticulum membrane. It carries out the reaction [E2 ubiquitin-conjugating enzyme]-S-ubiquitinyl-L-cysteine + [acceptor protein]-L-lysine = [E2 ubiquitin-conjugating enzyme]-L-cysteine + [acceptor protein]-N(6)-ubiquitinyl-L-lysine.. It functions in the pathway protein modification; protein ubiquitination. In terms of biological role, E3 ubiquitin-protein ligase which accepts ubiquitin from E2 ubiquitin-conjugating enzymes UBE2L3 and UBE2L6 in the form of a thioester and then directly transfers the ubiquitin to targeted substrates, such as UCKL1. Involved in the cytolytic activity of natural killer cells and cytotoxic T-cells. Protects against staurosporin-induced cell death. The sequence is that of E3 ubiquitin-protein ligase RNF19B (rnf19b) from Xenopus laevis (African clawed frog).